The primary structure comprises 431 residues: Protein EARLY STARVATION 1, chloroplastic (431 aa).

A chloroplast-targeting transit peptide spans 1–19 (MAACSRGLVARPFDLTARG). Disordered stretches follow at residues 65-126 (GNKP…DTGI) and 403-431 (GVYP…SPLE). Residues 415-431 (PAPPSDDPPGMPPSPLE) show a composition bias toward pro residues.

This sequence belongs to the ESV1 family.

The protein localises to the plastid. Its subcellular location is the chloroplast stroma. In terms of biological role, binds preferentially to highly ordered alpha-glucans, such as starch and crystalline maltodextrins. Involved in the organization of the starch granule matrix, thus influencing starch turnover by modulating the accessibility of starch polymers to modifying and degrading enzymes. Required for the control of starch degradation in leaves and starch distribution in nonphotosynthetic parts. Promotes gravitropic responses, negative in shoots but positive in roots, by facilitating starch granules (statoliths) formation in hypocotyls and roots columella. Facilitates tight packing of starch granules in grains. The chain is Protein EARLY STARVATION 1, chloroplastic from Oryza sativa subsp. japonica (Rice).